The following is a 219-amino-acid chain: Casein kinase II subunit beta' (219 aa).

At T2 the chain carries Phosphothreonine; by autocatalysis.

The protein belongs to the casein kinase 2 subunit beta family. In terms of assembly, tetramer of two alpha and two beta' subunits. In terms of processing, phosphorylated by alpha subunit.

Participates in Wnt signaling. Plays a complex role in regulating the basal catalytic activity of the alpha subunit. The protein is Casein kinase II subunit beta' (CkIIbeta2) of Drosophila melanogaster (Fruit fly).